Consider the following 307-residue polypeptide: MKLIIATRKSQLALWQSEHVAQILKNTHQIEVLLEGFKTKGDVLLDSPLAKIGGKGLFTKELEESMLRKEAHLAVHSLKDVPSFFPQGLVLAAVSKREQSTDAMLSQNYKDFLSLPKGAKIGTTSLRRKMQLLLLRPDLEIISLRGNVNSRIEKLKNNEFDAIILAMAGIKRLNLDKQVNFVYEFSKDELIPAASQGALGIESIKDEKILELLKCLNDENALIETSIEREFIATLEGGCQVPIGINAELLGDEICVRAVLGLPDGSEILKDKRMIKKNDFKGFGEGLAKEFITKGAKELLKKAESII.

Cys-239 bears the S-(dipyrrolylmethanemethyl)cysteine mark.

Belongs to the HMBS family. As to quaternary structure, monomer. The cofactor is dipyrromethane.

It carries out the reaction 4 porphobilinogen + H2O = hydroxymethylbilane + 4 NH4(+). The protein operates within porphyrin-containing compound metabolism; protoporphyrin-IX biosynthesis; coproporphyrinogen-III from 5-aminolevulinate: step 2/4. Tetrapolymerization of the monopyrrole PBG into the hydroxymethylbilane pre-uroporphyrinogen in several discrete steps. The chain is Porphobilinogen deaminase from Campylobacter jejuni subsp. doylei (strain ATCC BAA-1458 / RM4099 / 269.97).